The primary structure comprises 55 residues: Large ribosomal subunit protein bL33 (55 aa).

Belongs to the bacterial ribosomal protein bL33 family.

This chain is Large ribosomal subunit protein bL33, found in Enterobacter sp. (strain 638).